The following is a 137-amino-acid chain: Large ribosomal subunit protein bL17 (137 aa).

The protein belongs to the bacterial ribosomal protein bL17 family. As to quaternary structure, part of the 50S ribosomal subunit. Contacts protein L32.

The chain is Large ribosomal subunit protein bL17 from Caulobacter vibrioides (strain ATCC 19089 / CIP 103742 / CB 15) (Caulobacter crescentus).